The sequence spans 115 residues: Holo-[acyl-carrier-protein] synthase (115 aa).

D5 and E50 together coordinate Mg(2+).

It belongs to the P-Pant transferase superfamily. AcpS family. Mg(2+) is required as a cofactor.

It is found in the cytoplasm. The enzyme catalyses apo-[ACP] + CoA = holo-[ACP] + adenosine 3',5'-bisphosphate + H(+). In terms of biological role, transfers the 4'-phosphopantetheine moiety from coenzyme A to a Ser of acyl-carrier-protein. In Campylobacter fetus subsp. fetus (strain 82-40), this protein is Holo-[acyl-carrier-protein] synthase.